A 250-amino-acid polypeptide reads, in one-letter code: DNA polymerase sliding clamp (250 aa).

The protein belongs to the PCNA family. As to quaternary structure, homotrimer. The subunits circularize to form a toroid; DNA passes through its center. Replication factor C (RFC) is required to load the toroid on the DNA.

Its function is as follows. Sliding clamp subunit that acts as a moving platform for DNA processing. Responsible for tethering the catalytic subunit of DNA polymerase and other proteins to DNA during high-speed replication. The chain is DNA polymerase sliding clamp from Methanococcus maripaludis (strain C7 / ATCC BAA-1331).